The primary structure comprises 400 residues: Serine/threonine transporter SstT (400 aa).

The next 9 helical transmembrane spans lie at 14-34 (IIIAIILGIGVALLFPTVTPY), 48-68 (SVAPILVFVLVLSSIANFQVG), 76-96 (VLLLYVVGMLLAAFSAVIASL), 136-156 (AISEANFIGILAWAIGLGLAM), 177-197 (IIHKVIAFAPVGIFGLVAVTF), 211-231 (LLVVLLGTMLFVALVINPILV), 285-305 (IPLGATVNMAGAAVTITVLTL), 311-331 (LGIHVDLATMIILSVVATISA), and 349-371 (CSLFGISSEIAMQVVAVGMIISV).

The protein belongs to the dicarboxylate/amino acid:cation symporter (DAACS) (TC 2.A.23) family.

Its subcellular location is the cell inner membrane. The catalysed reaction is L-serine(in) + Na(+)(in) = L-serine(out) + Na(+)(out). It carries out the reaction L-threonine(in) + Na(+)(in) = L-threonine(out) + Na(+)(out). Functionally, involved in the import of serine and threonine into the cell, with the concomitant import of sodium (symport system). The polypeptide is Serine/threonine transporter SstT (Acinetobacter baumannii (strain AB307-0294)).